The following is a 183-amino-acid chain: DELTA-miturgitoxin-Cp1c (183 aa).

Positions 1 to 20 are cleaved as a signal peptide; that stretch reads MKFSLFFSVFFLAVLHACLS. A propeptide spanning residues 21–47 is cleaved from the precursor; that stretch reads ESEIDLEDEEHFMSSDSFLSEIQDESR. The Processing quadruplet motif signature appears at 44-47; it reads DESR. 8 cysteine pairs are disulfide-bonded: Cys-51-Cys-66, Cys-58-Cys-75, Cys-65-Cys-88, Cys-77-Cys-86, Cys-115-Cys-130, Cys-122-Cys-139, Cys-129-Cys-157, and Cys-141-Cys-155. Positions 164–177 are predicted alpha-helix; the sequence is QAIEGALRIAKKLI. At Trp-181 the chain carries Tryptophan amide.

This sequence belongs to the neurotoxin 19 (CSTX) family. Double-CSTX subfamily. Post-translationally, cleavage of the propeptide depends on the processing quadruplet motif (XXXR, with at least one of X being E). In terms of tissue distribution, expressed by the venom gland.

It is found in the secreted. The protein localises to the target cell membrane. Spider venom toxin that exhibits cytolytic activity by forming an alpha-helix across the membrane. Lethal to insect larvae. Causes instant paralysis and death in the larvae of the flesh fly (S.carnaria) at doses of 20 ug/g, at doses of less than 10 ug/g causes reversible paralysis. Has cytolytic activity against insect Sf9 cells. Causes stable and irreversible depolarization of fly muscle fibers, leading to contracture at higher toxin concentrations. Destabilizes membranes. This is DELTA-miturgitoxin-Cp1c from Cheiracanthium punctorium (Yellow sac spider).